Consider the following 448-residue polypeptide: Probable glycine dehydrogenase (decarboxylating) subunit 1 (448 aa).

This sequence belongs to the GcvP family. N-terminal subunit subfamily. The glycine cleavage system is composed of four proteins: P, T, L and H. In this organism, the P 'protein' is a heterodimer of two subunits.

It carries out the reaction N(6)-[(R)-lipoyl]-L-lysyl-[glycine-cleavage complex H protein] + glycine + H(+) = N(6)-[(R)-S(8)-aminomethyldihydrolipoyl]-L-lysyl-[glycine-cleavage complex H protein] + CO2. The glycine cleavage system catalyzes the degradation of glycine. The P protein binds the alpha-amino group of glycine through its pyridoxal phosphate cofactor; CO(2) is released and the remaining methylamine moiety is then transferred to the lipoamide cofactor of the H protein. The protein is Probable glycine dehydrogenase (decarboxylating) subunit 1 of Listeria monocytogenes serovar 1/2a (strain ATCC BAA-679 / EGD-e).